We begin with the raw amino-acid sequence, 120 residues long: Phosphoribosyl-ATP pyrophosphatase (120 aa).

It belongs to the PRA-PH family.

The protein localises to the cytoplasm. It catalyses the reaction 1-(5-phospho-beta-D-ribosyl)-ATP + H2O = 1-(5-phospho-beta-D-ribosyl)-5'-AMP + diphosphate + H(+). It functions in the pathway amino-acid biosynthesis; L-histidine biosynthesis; L-histidine from 5-phospho-alpha-D-ribose 1-diphosphate: step 2/9. This chain is Phosphoribosyl-ATP pyrophosphatase, found in Methylibium petroleiphilum (strain ATCC BAA-1232 / LMG 22953 / PM1).